Reading from the N-terminus, the 643-residue chain is Phosphoenolpyruvate carboxykinase [GTP] (643 aa).

Substrate-binding positions include Arg102 and Tyr253–Gly255. Lys262 and His282 together coordinate Mn(2+). Ser304 is a substrate binding site. Residue Ala305–Asn310 participates in GTP binding. Residue Cys306 is part of the active site. Asp329 serves as a coordination point for Mn(2+). Asn422–Arg424 is a binding site for substrate. Residues Arg424, Arg455, and Tyr548–Asn551 contribute to the GTP site.

Belongs to the phosphoenolpyruvate carboxykinase [GTP] family. Monomer. The cofactor is Mn(2+).

The enzyme catalyses oxaloacetate + GTP = phosphoenolpyruvate + GDP + CO2. Its function is as follows. In parasitic nematodes PEPCK carboxylates phosphoenolpyruvate to oxaloacetate thus introducing the products of glycolysis to mitochondrial metabolism. Catalyzes the conversion of oxaloacetate (OAA) to phosphoenolpyruvate (PEP), the rate-limiting step in the metabolic pathway that produces glucose from lactate and other precursors derived from the citric acid cycle. This chain is Phosphoenolpyruvate carboxykinase [GTP] (PEPCK), found in Ascaris suum (Pig roundworm).